The following is a 179-amino-acid chain: Fucolectin-4 (179 aa).

Positions 1-23 (MEVKTIMLLFQILAISTLKQGSA) are cleaved as a signal peptide. Positions 31-179 (EENVALRGRA…VEVNALLPVN (149 aa)) are F5/8 type C-like. Asn58, Asp61, Asn63, and Ser72 together coordinate Ca(2+). 3 disulfides stabilise this stretch: Cys73-Cys168, Cys104-Cys105, and Cys130-Cys146. 2 residues coordinate alpha-L-fucose: His75 and Arg101. The Cell attachment site motif lies at 101–103 (RGD). Arg108 is an alpha-L-fucose binding site. Positions 168 and 169 each coordinate Ca(2+).

The protein belongs to the fucolectin family. Homotrimer. Gill mucous cells.

It localises to the secreted. Its function is as follows. Acts as a defensive agent. Recognizes blood group fucosylated oligosaccharides including A, B, H and Lewis B-type antigens. Does not recognize Lewis A antigen and has low affinity for monovalent haptens. This chain is Fucolectin-4, found in Anguilla japonica (Japanese eel).